The following is a 364-amino-acid chain: Probable transcription factor At4g00390 (364 aa).

The segment at 1-149 is disordered; sequence MTKKLDPPTA…STKRVKKDEE (149 aa). Positions 13–32 are enriched in acidic residues; the sequence is SDEDDVETSEDDSSSSEEDE. The span at 39-80 shows a compositional bias: low complexity; it reads ATTAAAPAKSTAVSAATPAKSTSVSAAAPSKSTAVSAAADSD. Residues 81 to 93 are compositionally biased toward acidic residues; the sequence is SGSESETDSDSES.

The protein belongs to the GeBP family.

The polypeptide is Probable transcription factor At4g00390 (Arabidopsis thaliana (Mouse-ear cress)).